The following is a 787-amino-acid chain: Transcription factor SOX-6 (787 aa).

Positions 1–46 (MSSKQATSPFACAADGEDAMTQDLTSREKEEGSDQHVASHLPLHPI) are disordered. Residues 25–34 (TSREKEEGSD) are compositionally biased toward basic and acidic residues. Residue Thr119 is modified to Phosphothreonine. A coiled-coil region spans residues 184-262 (LAEKERQLST…LLQQQIQVQG (79 aa)). The interval 340–429 (PGAKMPSTPQ…KSSIPSPIGG (90 aa)) is disordered. The segment covering 352-361 (NTAGTVSPTG) has biased composition (polar residues). At Ser358 the chain carries Phosphoserine. At Thr360 the chain carries Phosphothreonine. Glycyl lysine isopeptide (Lys-Gly) (interchain with G-Cter in SUMO) cross-links involve residues Lys363 and Lys376. Phosphoserine is present on residues Ser398 and Ser401. A compositionally biased stretch (polar residues) spans 398–420 (SPTSPTQNLFPASKTSPVNLPNK). Residues 580–648 (IKRPMNAFMV…IHLEKYPNYK (69 aa)) constitute a DNA-binding region (HMG box). The segment covering 712–740 (TPSPQMTSDCSSTSASPEPSLPVIQSTYG) has biased composition (polar residues). The interval 712–787 (TPSPQMTSDC…NEAPEAVSAN (76 aa)) is disordered. Acidic residues predominate over residues 755–768 (NGEDEMEMYDDYED).

As to quaternary structure, homodimer. Interacts with DAZAP2. May interact with CENPK. Sumoylation inhibits the transcriptional activity.

The protein localises to the nucleus. It localises to the cytoplasm. Transcription factor that plays a key role in several developmental processes, including neurogenesis, chondrocytes differentiation and cartilage formation. Specifically binds the 5'-AACAAT-3' DNA motif present in enhancers and super-enhancers and promotes expression of genes important for chondrogenesis. Required for overt chondrogenesis when condensed prechondrocytes differentiate into early stage chondrocytes: SOX5 and SOX6 cooperatively bind with SOX9 on active enhancers and super-enhancers associated with cartilage-specific genes, and thereby potentiate SOX9's ability to transactivate. Not involved in precartilaginous condensation, the first step in chondrogenesis, during which skeletal progenitors differentiate into prechondrocytes. Together with SOX5, required to form and maintain a pool of highly proliferating chondroblasts between epiphyses and metaphyses, to form columnar chondroblasts, delay chondrocyte prehypertrophy but promote hypertrophy, and to delay terminal differentiation of chondrocytes on contact with ossification fronts. Binds to the proximal promoter region of the myelin protein MPZ gene, and is thereby involved in the differentiation of oligodendroglia in the developing spinal tube. Binds to the gene promoter of MBP and acts as a transcriptional repressor. This is Transcription factor SOX-6 from Pongo abelii (Sumatran orangutan).